Here is a 277-residue protein sequence, read N- to C-terminus: Phosphoribosylaminoimidazole-succinocarboxamide synthase (277 aa).

It belongs to the SAICAR synthetase family.

It catalyses the reaction 5-amino-1-(5-phospho-D-ribosyl)imidazole-4-carboxylate + L-aspartate + ATP = (2S)-2-[5-amino-1-(5-phospho-beta-D-ribosyl)imidazole-4-carboxamido]succinate + ADP + phosphate + 2 H(+). It participates in purine metabolism; IMP biosynthesis via de novo pathway; 5-amino-1-(5-phospho-D-ribosyl)imidazole-4-carboxamide from 5-amino-1-(5-phospho-D-ribosyl)imidazole-4-carboxylate: step 1/2. The chain is Phosphoribosylaminoimidazole-succinocarboxamide synthase from Salinispora arenicola (strain CNS-205).